Here is a 77-residue protein sequence, read N- to C-terminus: Serine protease inhibitor 3 (77 aa).

The signal sequence occupies residues 1 to 17; that stretch reads MMFTPLIVLTLLVLATA. Cystine bridges form between C21-C53, C30-C48, C33-C44, and C55-C68. The TIL domain occupies 21 to 74; sequence CGPNEQWSGCPKCELQSGESDKPCATICGEPKCYCSPDKYRRIPDGRCIRKIQC.

It localises to the secreted. In terms of biological role, defends the organism against the host's proteinases. This chain is Serine protease inhibitor 3, found in Anisakis simplex (Herring worm).